The following is a 305-amino-acid chain: Ornithine carbamoyltransferase (305 aa).

Carbamoyl phosphate is bound by residues 54 to 57 (STRT), Q81, R105, and 132 to 135 (HPCQ). L-ornithine contacts are provided by residues N163, D220, and 224–225 (SM). Residues 260–261 (CL) and R288 contribute to the carbamoyl phosphate site.

It belongs to the aspartate/ornithine carbamoyltransferase superfamily. OTCase family.

The protein resides in the cytoplasm. The catalysed reaction is carbamoyl phosphate + L-ornithine = L-citrulline + phosphate + H(+). The protein operates within amino-acid biosynthesis; L-arginine biosynthesis; L-arginine from L-ornithine and carbamoyl phosphate: step 1/3. Functionally, reversibly catalyzes the transfer of the carbamoyl group from carbamoyl phosphate (CP) to the N(epsilon) atom of ornithine (ORN) to produce L-citrulline. The chain is Ornithine carbamoyltransferase from Chromohalobacter salexigens (strain ATCC BAA-138 / DSM 3043 / CIP 106854 / NCIMB 13768 / 1H11).